Here is a 396-residue protein sequence, read N- to C-terminus: L-lactate dehydrogenase (396 aa).

Residues 1 to 380 (MIISAASDYR…TQDSLVQGLG (380 aa)) enclose the FMN hydroxy acid dehydrogenase domain. A substrate-binding site is contributed by Tyr-24. Residues Ser-106 and Gln-127 each coordinate FMN. Tyr-129 provides a ligand contact to substrate. Thr-155 is an FMN binding site. Arg-164 serves as a coordination point for substrate. Lys-251 is an FMN binding site. His-275 serves as the catalytic Proton acceptor. Arg-278 lines the substrate pocket. 306–330 (DSGIRNGLDVVRMIALGADTVLLGR) is a binding site for FMN.

Belongs to the FMN-dependent alpha-hydroxy acid dehydrogenase family. Requires FMN as cofactor.

The protein resides in the cell inner membrane. The enzyme catalyses (S)-lactate + A = pyruvate + AH2. In terms of biological role, catalyzes the conversion of L-lactate to pyruvate. Is coupled to the respiratory chain. This chain is L-lactate dehydrogenase, found in Shigella flexneri serotype 5b (strain 8401).